We begin with the raw amino-acid sequence, 188 residues long: HTH-type transcriptional regulator QacR (188 aa).

In terms of domain architecture, HTH tetR-type spans 1–61; sequence MNLKDKILGV…EILNIEESKW (61 aa). The H-T-H motif DNA-binding region spans 24 to 43; sequence TTGEIVKLSESSKGNLYYHF.

Homodimer. Binds cooperatively to DNA as a pair of dimers.

Its function is as follows. Transcriptional repressor of qacA. Binds to IR1, an unusually long 28 bp operator, which is located downstream from the qacA promoter and overlaps its transcription start site. QacR is induced from its IR1 site by binding to one of many structurally dissimilar cationic lipophilic compounds, which are also substrates of QacA. This chain is HTH-type transcriptional regulator QacR (qacR), found in Staphylococcus aureus (strain Mu50 / ATCC 700699).